Here is a 72-residue protein sequence, read N- to C-terminus: Teretoxin Tsu11.2 (72 aa).

An N-terminal signal peptide occupies residues 1 to 21 (MMAKATMAFCFLLMLTTVMLP). A propeptide spanning residues 22–30 (TEGKTIAGR) is cleaved from the precursor.

The protein belongs to the teretoxin H (TH) superfamily. Contains 4 disulfide bonds. In terms of tissue distribution, expressed by the venom duct.

The protein resides in the secreted. This is Teretoxin Tsu11.2 from Terebra subulata (Chocolate spotted auger).